Consider the following 308-residue polypeptide: U-box domain-containing protein 54 (308 aa).

Residues 172 to 235 (FSEFSTSAEK…NESDEDPRLE (64 aa)) are disordered. Over residues 210 to 227 (ESPKKGRKETIEKSKSNE) the composition is skewed to basic and acidic residues. Positions 232–306 (PRLEDFKCPI…KDWLEKNPNY (75 aa)) constitute a U-box domain.

The enzyme catalyses S-ubiquitinyl-[E2 ubiquitin-conjugating enzyme]-L-cysteine + [acceptor protein]-L-lysine = [E2 ubiquitin-conjugating enzyme]-L-cysteine + N(6)-ubiquitinyl-[acceptor protein]-L-lysine.. Its pathway is protein modification; protein ubiquitination. Its function is as follows. Functions as an E3 ubiquitin ligase. This is U-box domain-containing protein 54 (PUB54) from Arabidopsis thaliana (Mouse-ear cress).